Consider the following 204-residue polypeptide: Bombinin-like peptides 1 (204 aa).

Residues 1–16 constitute a signal peptide (or 18); it reads MNFKYIVAVSILIASA. Residues Asn-70 and Asn-133 each carry the asparagine amide modification.

This sequence belongs to the bombinin family. Expressed by the skin glands.

It is found in the secreted. Its function is as follows. Has antimicrobial activity, but no hemolytic activity. Preference on killing Gram-negative non-enteric bacteria. This chain is Bombinin-like peptides 1, found in Bombina orientalis (Oriental fire-bellied toad).